The primary structure comprises 29 residues: Cuticle protein 36 (29 aa).

Its function is as follows. Component of the cuticle of migratory locust which contains more than 100 different structural proteins. The polypeptide is Cuticle protein 36 (Locusta migratoria (Migratory locust)).